The following is a 768-amino-acid chain: Protein ITPRID2 (768 aa).

3 disordered regions span residues 1–24 (MTTE…AEDS), 39–78 (LQAM…ESEE), and 98–124 (RKSG…CSPG). Composition is skewed to polar residues over residues 39 to 57 (LQAM…TVTS) and 102 to 122 (SQDF…STCS). 8 positions are modified to phosphoserine: S153, S177, S246, S248, S255, S268, S276, and S312. The disordered stretch occupies residues 315 to 338 (SVKKEEAPQSEAPRVEECHHGRTP). A compositionally biased stretch (basic and acidic residues) spans 316–334 (VKKEEAPQSEAPRVEECHH). K317 participates in a covalent cross-link: Glycyl lysine isopeptide (Lys-Gly) (interchain with G-Cter in SUMO2). A phosphoserine mark is found at S378 and S411. Residues 468–546 (QELQVMRRSL…GLEEQLRAVR (79 aa)) adopt a coiled-coil conformation. A phosphoserine mark is found at S549, S564, S569, S572, S627, and S643. Disordered regions lie at residues 605 to 647 (IPPG…VGKP) and 663 to 718 (ALTP…AAEE). Positions 610-627 (SSESVFSQATSESSSVCS) are enriched in polar residues. The residue at position 665 (T665) is a Phosphothreonine. Residues 667 to 677 (TAPSRTGSVQT) show a composition bias toward polar residues. The residue at position 670 (S670) is a Phosphoserine. Phosphothreonine is present on T677. Residues 682-694 (ESSEEVDAAEEAP) are compositionally biased toward acidic residues.

Its subcellular location is the cytoplasm. This chain is Protein ITPRID2, found in Pongo abelii (Sumatran orangutan).